The sequence spans 420 residues: Glucose-1-phosphate adenylyltransferase (420 aa).

Residues Tyr-107, Gly-172, 187 to 188, and Ser-205 each bind alpha-D-glucose 1-phosphate; that span reads EK.

Belongs to the bacterial/plant glucose-1-phosphate adenylyltransferase family. Homotetramer.

The enzyme catalyses alpha-D-glucose 1-phosphate + ATP + H(+) = ADP-alpha-D-glucose + diphosphate. The protein operates within glycan biosynthesis; glycogen biosynthesis. Its function is as follows. Involved in the biosynthesis of ADP-glucose, a building block required for the elongation reactions to produce glycogen. Catalyzes the reaction between ATP and alpha-D-glucose 1-phosphate (G1P) to produce pyrophosphate and ADP-Glc. This Bradyrhizobium diazoefficiens (strain JCM 10833 / BCRC 13528 / IAM 13628 / NBRC 14792 / USDA 110) protein is Glucose-1-phosphate adenylyltransferase.